A 429-amino-acid polypeptide reads, in one-letter code: UDP-N-acetylglucosamine 1-carboxyvinyltransferase 2 (429 aa).

22 to 23 (KN) provides a ligand contact to phosphoenolpyruvate. Arg-93 serves as a coordination point for UDP-N-acetyl-alpha-D-glucosamine. Cys-117 (proton donor) is an active-site residue. Cys-117 is modified (2-(S-cysteinyl)pyruvic acid O-phosphothioketal). UDP-N-acetyl-alpha-D-glucosamine contacts are provided by residues 122 to 126 (RPIDQ), Asp-305, and Ile-327.

Belongs to the EPSP synthase family. MurA subfamily.

It is found in the cytoplasm. It catalyses the reaction phosphoenolpyruvate + UDP-N-acetyl-alpha-D-glucosamine = UDP-N-acetyl-3-O-(1-carboxyvinyl)-alpha-D-glucosamine + phosphate. Its pathway is cell wall biogenesis; peptidoglycan biosynthesis. Its function is as follows. Cell wall formation. Adds enolpyruvyl to UDP-N-acetylglucosamine. This chain is UDP-N-acetylglucosamine 1-carboxyvinyltransferase 2, found in Bacillus cereus (strain ATCC 14579 / DSM 31 / CCUG 7414 / JCM 2152 / NBRC 15305 / NCIMB 9373 / NCTC 2599 / NRRL B-3711).